A 315-amino-acid polypeptide reads, in one-letter code: Olfactory receptor 2V2 (315 aa).

Topologically, residues 1 to 26 (METWVNQSYTDGFFLLGIFSHSTADL) are extracellular. A glycan (N-linked (GlcNAc...) asparagine) is linked at asparagine 6. Residues 27–50 (VLFSVVMAVFTVALCGNVLLIFLI) traverse the membrane as a helical segment. Residues 51 to 58 (YMDPHLHT) are Cytoplasmic-facing. Residues 59-80 (PMYFFLSQLSLMDLMLVCTNVP) form a helical membrane-spanning segment. The Extracellular segment spans residues 81–101 (KMAANFLSGRKSISFVGCGIQ). The cysteines at positions 98 and 190 are disulfide-linked. Residues 102–121 (IGLFVCLVGSEGLLLGLMAY) traverse the membrane as a helical segment. Residues 122 to 140 (DRYVAISHPLHYPILMNQR) lie on the Cytoplasmic side of the membrane. Residues 141–159 (VCLQITGSSWAFGIIDGLI) form a helical membrane-spanning segment. Topologically, residues 160–196 (QMVVVMNFPYCGLRKVNHFFCEMLSLLKLACVDTSLF) are extracellular. Residues 197-220 (EKVIFACCVFMLLFPFSIIVASYA) form a helical membrane-spanning segment. Topologically, residues 221–237 (HILGTVLQMHSAQAWKK) are cytoplasmic. The helical transmembrane segment at 238–260 (ALATCSSHLTAVTLFYGAAMFIY) threads the bilayer. The Extracellular portion of the chain corresponds to 261 to 273 (LRPRHYRAPSHDK). The chain crosses the membrane as a helical span at residues 274 to 293 (VASIFYTVLTPMLNPLIYSL). Over 294 to 315 (RNREVMGALRKGLDRCRIGSQH) the chain is Cytoplasmic.

Belongs to the G-protein coupled receptor 1 family.

The protein localises to the cell membrane. In terms of biological role, odorant receptor. This is Olfactory receptor 2V2 (OR2V2) from Homo sapiens (Human).